The sequence spans 250 residues: Imidazole glycerol phosphate synthase subunit HisF (250 aa).

Residues Asp-11 and Asp-130 contribute to the active site.

This sequence belongs to the HisA/HisF family. In terms of assembly, heterodimer of HisH and HisF.

The protein localises to the cytoplasm. It carries out the reaction 5-[(5-phospho-1-deoxy-D-ribulos-1-ylimino)methylamino]-1-(5-phospho-beta-D-ribosyl)imidazole-4-carboxamide + L-glutamine = D-erythro-1-(imidazol-4-yl)glycerol 3-phosphate + 5-amino-1-(5-phospho-beta-D-ribosyl)imidazole-4-carboxamide + L-glutamate + H(+). It functions in the pathway amino-acid biosynthesis; L-histidine biosynthesis; L-histidine from 5-phospho-alpha-D-ribose 1-diphosphate: step 5/9. Functionally, IGPS catalyzes the conversion of PRFAR and glutamine to IGP, AICAR and glutamate. The HisF subunit catalyzes the cyclization activity that produces IGP and AICAR from PRFAR using the ammonia provided by the HisH subunit. The chain is Imidazole glycerol phosphate synthase subunit HisF from Bacteroides fragilis (strain ATCC 25285 / DSM 2151 / CCUG 4856 / JCM 11019 / LMG 10263 / NCTC 9343 / Onslow / VPI 2553 / EN-2).